The following is a 199-amino-acid chain: Holliday junction branch migration complex subunit RuvA (199 aa).

The domain I stretch occupies residues 1–65 (MIGWLHGQII…EDALLLYGFL (65 aa)). Residues 66–144 (DKEERSLFRS…QFDGSVSDTF (79 aa)) are domain II. The segment at 144–148 (FQKQA) is flexible linker. The interval 149-199 (GSTHSQQEAISALEALGYKPQEAWKVMNKIDNGNKSCEQLIREALQILSSR) is domain III.

Belongs to the RuvA family. In terms of assembly, homotetramer. Forms an RuvA(8)-RuvB(12)-Holliday junction (HJ) complex. HJ DNA is sandwiched between 2 RuvA tetramers; dsDNA enters through RuvA and exits via RuvB. An RuvB hexamer assembles on each DNA strand where it exits the tetramer. Each RuvB hexamer is contacted by two RuvA subunits (via domain III) on 2 adjacent RuvB subunits; this complex drives branch migration. In the full resolvosome a probable DNA-RuvA(4)-RuvB(12)-RuvC(2) complex forms which resolves the HJ.

It is found in the cytoplasm. In terms of biological role, the RuvA-RuvB-RuvC complex processes Holliday junction (HJ) DNA during genetic recombination and DNA repair, while the RuvA-RuvB complex plays an important role in the rescue of blocked DNA replication forks via replication fork reversal (RFR). RuvA specifically binds to HJ cruciform DNA, conferring on it an open structure. The RuvB hexamer acts as an ATP-dependent pump, pulling dsDNA into and through the RuvAB complex. HJ branch migration allows RuvC to scan DNA until it finds its consensus sequence, where it cleaves and resolves the cruciform DNA. The sequence is that of Holliday junction branch migration complex subunit RuvA from Legionella pneumophila subsp. pneumophila (strain Philadelphia 1 / ATCC 33152 / DSM 7513).